A 301-amino-acid polypeptide reads, in one-letter code: Phosphatidylglycerol--prolipoprotein diacylglyceryl transferase (301 aa).

7 helical membrane-spanning segments follow: residues 17–37 (LAVRWYGLMYLVAFIMAIVVG), 59–79 (MLFYGVLGTILGGRFGYVLFY), 97–117 (GGMSFHGGFLGVTFAMILFAW), 129–149 (FVAPMVPAGLAAGRLGNFING), 203–223 (PSQLYEIALEGVVLFLVLWLF), 230–250 (VGAASAVFLIGYGLARFTVEF), and 257–277 (FLGLLALGLSMGQWLSLPMII). R142 serves as a coordination point for a 1,2-diacyl-sn-glycero-3-phospho-(1'-sn-glycerol).

It belongs to the Lgt family.

It is found in the cell inner membrane. The catalysed reaction is L-cysteinyl-[prolipoprotein] + a 1,2-diacyl-sn-glycero-3-phospho-(1'-sn-glycerol) = an S-1,2-diacyl-sn-glyceryl-L-cysteinyl-[prolipoprotein] + sn-glycerol 1-phosphate + H(+). The protein operates within protein modification; lipoprotein biosynthesis (diacylglyceryl transfer). Its function is as follows. Catalyzes the transfer of the diacylglyceryl group from phosphatidylglycerol to the sulfhydryl group of the N-terminal cysteine of a prolipoprotein, the first step in the formation of mature lipoproteins. The polypeptide is Phosphatidylglycerol--prolipoprotein diacylglyceryl transferase (Paraburkholderia phymatum (strain DSM 17167 / CIP 108236 / LMG 21445 / STM815) (Burkholderia phymatum)).